We begin with the raw amino-acid sequence, 100 residues long: Large ribosomal subunit protein bL21 (100 aa).

This sequence belongs to the bacterial ribosomal protein bL21 family. In terms of assembly, part of the 50S ribosomal subunit. Contacts protein L20.

Functionally, this protein binds to 23S rRNA in the presence of protein L20. This chain is Large ribosomal subunit protein bL21, found in Paramagnetospirillum magneticum (strain ATCC 700264 / AMB-1) (Magnetospirillum magneticum).